A 305-amino-acid chain; its full sequence is Divergent heme oxygenase-like protein (305 aa).

An N-terminal signal peptide occupies residues 1–18; sequence MIRKIIILMFTFFSNIHN. A sufficient for apicoplast targeting region spans residues 1-83; it reads MIRKIIILMF…GVDKNNINYN (83 aa). N-linked (GlcNAc...) asparagine glycosylation is found at Asn132, Asn159, and Asn288.

Post-translationally, proteolytically cleaved; targeted by its N-terminal leader sequence for import into the apicoplast where it undergoes proteolytic processing, resulting in an N-terminus starting at or near Gly-33 in the mature protein.

Its subcellular location is the plastid. The protein resides in the apicoplast. Its function is as follows. Essential for blood-stage parasite viability. Required for apicoplast biogenesis. Associates with the apicoplast genome and mediates apicoplast gene expression. Can bind heme. Can bind protoporphyrin IX. The protein is Divergent heme oxygenase-like protein of Plasmodium falciparum (isolate 3D7).